The sequence spans 380 residues: DNA primase small subunit PriS (380 aa).

Active-site residues include D103, D105, and D284.

This sequence belongs to the eukaryotic-type primase small subunit family. In terms of assembly, heterodimer of a small subunit (PriS) and a large subunit (PriL). Mg(2+) is required as a cofactor. The cofactor is Mn(2+).

Its function is as follows. Catalytic subunit of DNA primase, an RNA polymerase that catalyzes the synthesis of short RNA molecules used as primers for DNA polymerase during DNA replication. The small subunit contains the primase catalytic core and has DNA synthesis activity on its own. Binding to the large subunit stabilizes and modulates the activity, increasing the rate of DNA synthesis while decreasing the length of the DNA fragments, and conferring RNA synthesis capability. The DNA polymerase activity may enable DNA primase to also catalyze primer extension after primer synthesis. May also play a role in DNA repair. This chain is DNA primase small subunit PriS, found in Methanocorpusculum labreanum (strain ATCC 43576 / DSM 4855 / Z).